Here is a 1048-residue protein sequence, read N- to C-terminus: FHIP family protein GJ17503 (1048 aa).

Residues 1–15 are compositionally biased toward polar residues; the sequence is MSWLRTSPLRQSLTR. The tract at residues 1–32 is disordered; sequence MSWLRTSPLRQSLTRNSGSSGSGNSSATTTLR. Positions 16 to 26 are enriched in low complexity; sequence NSGSSGSGNSS. S500 is subject to Phosphoserine. Disordered stretches follow at residues 652–675, 813–871, and 924–984; these read TTTA…GRRD, APMH…KRRS, and ARGA…ESGL. Residues 816-838 show a composition bias toward low complexity; it reads HQQHQQQQLQHTTNPTQQQQAQQ. Composition is skewed to polar residues over residues 839–857 and 929–954; these read RSTY…SPTS and QEQS…TAVV. Positions 955-978 are enriched in low complexity; the sequence is SSSNSSIGGSTQTLSATHSSSTLH.

The protein belongs to the FHIP family.

The sequence is that of FHIP family protein GJ17503 from Drosophila virilis (Fruit fly).